The chain runs to 347 residues: Uroporphyrinogen decarboxylase (347 aa).

Substrate-binding positions include 36 to 40 (RQAGR), D86, Y160, S212, and H326.

The protein belongs to the uroporphyrinogen decarboxylase family. In terms of assembly, homodimer.

The protein resides in the cytoplasm. It catalyses the reaction uroporphyrinogen III + 4 H(+) = coproporphyrinogen III + 4 CO2. It functions in the pathway porphyrin-containing compound metabolism; protoporphyrin-IX biosynthesis; coproporphyrinogen-III from 5-aminolevulinate: step 4/4. Functionally, catalyzes the decarboxylation of four acetate groups of uroporphyrinogen-III to yield coproporphyrinogen-III. This chain is Uroporphyrinogen decarboxylase, found in Wolbachia sp. subsp. Brugia malayi (strain TRS).